The chain runs to 312 residues: Ribosomal protein L11 methyltransferase (312 aa).

S-adenosyl-L-methionine-binding residues include T162, G183, D205, and N248.

The protein belongs to the methyltransferase superfamily. PrmA family.

The protein localises to the cytoplasm. It carries out the reaction L-lysyl-[protein] + 3 S-adenosyl-L-methionine = N(6),N(6),N(6)-trimethyl-L-lysyl-[protein] + 3 S-adenosyl-L-homocysteine + 3 H(+). Methylates ribosomal protein L11. This is Ribosomal protein L11 methyltransferase from Geobacillus thermodenitrificans (strain NG80-2).